The primary structure comprises 212 residues: N-(5'-phosphoribosyl)anthranilate isomerase (212 aa).

The protein belongs to the TrpF family.

It catalyses the reaction N-(5-phospho-beta-D-ribosyl)anthranilate = 1-(2-carboxyphenylamino)-1-deoxy-D-ribulose 5-phosphate. It participates in amino-acid biosynthesis; L-tryptophan biosynthesis; L-tryptophan from chorismate: step 3/5. This is N-(5'-phosphoribosyl)anthranilate isomerase from Cereibacter sphaeroides (strain ATCC 17029 / ATH 2.4.9) (Rhodobacter sphaeroides).